Here is a 462-residue protein sequence, read N- to C-terminus: NAD-capped RNA hydrolase NUDT12 (462 aa).

ANK repeat units follow at residues 11-40 (EIVTQFHCSAAEGDIAKLTGILSHSPSLLN), 45-74 (NGWTALMYAARNGHPEIVQFLLEKGCDRSI), and 78-98 (SRQTALDIAVFWGYKHIANLL). The residue at position 185 (lysine 185) is an N6-succinyllysine. Positions 284 and 287 each coordinate Zn(2+). Position 292 is an N6-succinyllysine (lysine 292). Zn(2+)-binding residues include cysteine 302 and cysteine 307. Substrate contacts are provided by residues tyrosine 318, 354 to 356 (AGF), glutamate 370, glutamate 374, and glutamate 415. Residues 319–453 (PRVDPVVIMQ…SRAIAHQLIK (135 aa)) enclose the Nudix hydrolase domain. Positions 354, 370, 374, and 415 each coordinate Mg(2+). A Nudix box motif is present at residues 355–376 (GFIEPGETIEDAVRREVEEESG). A Microbody targeting signal motif is present at residues 460-462 (PNL).

It belongs to the Nudix hydrolase family. NudC subfamily. Homodimer. Homodimerization is essential for its catalytic activity and protein stability. Interacts (via ANK repeats) with BLMH. Requires Mg(2+) as cofactor. Zn(2+) serves as cofactor.

Its subcellular location is the cytoplasm. It is found in the peroxisome. The protein localises to the cytoplasmic granule. The enzyme catalyses a 5'-end NAD(+)-phospho-ribonucleoside in mRNA + H2O = a 5'-end phospho-adenosine-phospho-ribonucleoside in mRNA + beta-nicotinamide D-ribonucleotide + 2 H(+). It carries out the reaction NAD(+) + H2O = beta-nicotinamide D-ribonucleotide + AMP + 2 H(+). The catalysed reaction is NADH + H2O = reduced beta-nicotinamide D-ribonucleotide + AMP + 2 H(+). It catalyses the reaction NADPH + H2O = reduced beta-nicotinamide D-ribonucleotide + adenosine 2',5'-bisphosphate + 2 H(+). In terms of biological role, mRNA decapping enzyme that specifically removes the nicotinamide adenine dinucleotide (NAD) cap from a subset of mRNAs by hydrolyzing the diphosphate linkage to produce nicotinamide mononucleotide (NMN) and 5' monophosphate mRNA. The NAD-cap is present at the 5'-end of some RNAs; in contrast to the canonical N7 methylguanosine (m7G) cap, the NAD cap promotes mRNA decay. Preferentially acts on NAD-capped transcripts in response to nutrient stress. Also acts on free nicotinamide adenine dinucleotide molecules: hydrolyzes NAD(H) into NMN(H) and AMP, and NADPH into NMNH and 2',5'-ADP. May act to regulate the concentration of peroxisomal nicotinamide nucleotide cofactors required for oxidative metabolism in this organelle. Regulates the levels of circadian clock components PER1, PER2, PER3 and CRY2 in the liver. This is NAD-capped RNA hydrolase NUDT12 from Macaca fascicularis (Crab-eating macaque).